A 783-amino-acid chain; its full sequence is Cation/H(+) antiporter 10 (783 aa).

12 consecutive transmembrane segments (helical) span residues 31 to 51, 61 to 81, 100 to 120, 135 to 155, 175 to 195, 206 to 226, 244 to 264, 276 to 295, 300 to 322, 356 to 376, 389 to 409, and 418 to 438; these read VVFGYSLPLLEIQIILIFFCI, IGISQIASYMIAGIVLGPQLF, IAALRCISVFGTLMFTFLMTV, VVIGIVSFFAPLFGLGFQNFF, AIVITQSSILLPSTTYILLEL, ALSACVINDILGIFSMIVASI, AVIIFFLVVFLVFKPMVQWVI, MYIHAVIITALASAAYFVFF, ILGPLMIGIIIPEGPPLGSALEA, IFFNIFLTFLILVIKLVACLA, LAVSFILSYKSFADFVLYEAV, and ATYSFLILYSLLNAGIVPTVL.

Belongs to the monovalent cation:proton antiporter 2 (CPA2) transporter (TC 2.A.37) family. CHX (TC 2.A.37.4) subfamily. Specifically expressed in pollen.

It is found in the membrane. In terms of biological role, may operate as a cation/H(+) antiporter. This chain is Cation/H(+) antiporter 10 (CHX10), found in Arabidopsis thaliana (Mouse-ear cress).